The chain runs to 1552 residues: Nonribosomal peptide synthetase acrB (1552 aa).

The segment at 129 to 564 is condensation; the sequence is ASFAQERIWF…PVANLAIFDE (436 aa). The segment at 594–999 is adenylation; sequence RHCKAHPRDV…RMEGSAQVKI (406 aa). The region spanning 1110-1186 is the Carrier domain; it reads APLGVEEEVM…AMARLLQPQE (77 aa). S1146 carries the post-translational modification O-(pantetheine 4'-phosphoryl)serine. Residues 1226–1464 are thiolester reductase (R) domain; that stretch reads LTGATGFLGR…DFVGVDAVAS (239 aa).

Belongs to the NRP synthetase family.

It functions in the pathway secondary metabolite biosynthesis. Functionally, nonribosomal peptide synthetase; part of the cluster that mediates the biosynthesis of acurin A, a highly reduced polyketide coupled to a serine via a peptide bond. The activities of the highly reducing polyketide synthase acrA and the nonribosomal peptide synthetase acrB are collectively responsible for the synthesis of the acurin A core structure with a heptaketide backbone produced by acrA covalently fused to a L-serine by acrB. After the formation of the PK-NRP hybrid product, it is detached from acrB by reductive release to set up the formation of the lactam ring by aldol condensation. The hydrolyase acrC then catalyzes water loss to generate a double bond in the ring. This double bond is probably reduced, which is followed by three oxidations at C-22 to generate the carboxylic acid moiety, involving probably the FAD-binding monooxygenase acrE and the cytochrome P450 monooxygenases acrD and acrF. Finally, a last methylation step performed by the O-methyltransferase acrG leads to the production of acurin A. This Aspergillus aculeatus (strain ATCC 16872 / CBS 172.66 / WB 5094) protein is Nonribosomal peptide synthetase acrB.